A 239-amino-acid polypeptide reads, in one-letter code: Phosphoribosylaminoimidazole-succinocarboxamide synthase (239 aa).

The protein belongs to the SAICAR synthetase family.

The enzyme catalyses 5-amino-1-(5-phospho-D-ribosyl)imidazole-4-carboxylate + L-aspartate + ATP = (2S)-2-[5-amino-1-(5-phospho-beta-D-ribosyl)imidazole-4-carboxamido]succinate + ADP + phosphate + 2 H(+). Its pathway is purine metabolism; IMP biosynthesis via de novo pathway; 5-amino-1-(5-phospho-D-ribosyl)imidazole-4-carboxamide from 5-amino-1-(5-phospho-D-ribosyl)imidazole-4-carboxylate: step 1/2. The polypeptide is Phosphoribosylaminoimidazole-succinocarboxamide synthase (Bacillus cereus (strain B4264)).